The chain runs to 308 residues: uncharacterized protein (308 aa).

Positions 50, 90, 117, 182, 186, 222, and 224 each coordinate NADP(+). Tyrosine 182 serves as the catalytic Proton acceptor. The Lowers pKa of active site Tyr role is filled by lysine 186.

This sequence belongs to the short-chain dehydrogenases/reductases (SDR) family.

This is an uncharacterized protein from Saccharomyces cerevisiae (strain ATCC 204508 / S288c) (Baker's yeast).